The sequence spans 420 residues: Protein disulfide isomerase CRELD1 (420 aa).

A signal peptide spans 1–29 (MAPRSSRGIAPAMLCGLSLFLGFPGLVWV). The Extracellular portion of the chain corresponds to 30 to 362 (QISVPPQSSP…GFFSEMTEDE (333 aa)). The CXXC motif lies at 46–49 (CHTC). 4 disulfide bridges follow: cysteine 46/cysteine 49, cysteine 155/cysteine 169, cysteine 163/cysteine 181, and cysteine 183/cysteine 192. Residues 153 to 193 (LPCPGGAERPCGGYGHCEGEGTRGGSGHCDCQAGYGGEACG) form the EGF-like 1 domain. An N-linked (GlcNAc...) asparagine glycan is attached at asparagine 205. FU repeat units lie at residues 208–255 (HLVC…ERAS) and 268–315 (SYEC…AVCP). The CXXC motif lies at 278–281 (CLGC). Disulfide bonds link cysteine 278/cysteine 281, cysteine 309/cysteine 321, cysteine 314/cysteine 330, and cysteine 332/cysteine 343. One can recognise an EGF-like 2; calcium-binding domain in the interval 305 to 344 (DVDECETAVCPGENQQCENTEGSYRCICADGYKQMEGICV). The chain crosses the membrane as a helical span at residues 363–383 (LVVLQQMFFGVIICALATLAA). Lysine 384 is a topological domain (cytoplasmic). Residues 385–405 (GDLVFTAIFIGAVAAMTGYWL) form a helical membrane-spanning segment. The Extracellular portion of the chain corresponds to 406-420 (SERSDRVLEGFIKGR).

It belongs to the CRELD family.

Its subcellular location is the membrane. It catalyses the reaction Catalyzes the rearrangement of -S-S- bonds in proteins.. Protein disulfide isomerase. Promotes the localization of acetylcholine receptors (AChRs) to the plasma membrane. The sequence is that of Protein disulfide isomerase CRELD1 (CRELD1) from Bos taurus (Bovine).